Here is a 321-residue protein sequence, read N- to C-terminus: Glycerol-3-phosphate dehydrogenase [NAD(P)+] (321 aa).

Positions 15, 35, and 101 each coordinate NADPH. Sn-glycerol 3-phosphate contacts are provided by lysine 101 and glycine 129. Position 133 (alanine 133) interacts with NADPH. Positions 184, 237, 247, 248, and 249 each coordinate sn-glycerol 3-phosphate. The Proton acceptor role is filled by lysine 184. Position 248 (arginine 248) interacts with NADPH. NADPH contacts are provided by valine 268 and glutamate 270.

This sequence belongs to the NAD-dependent glycerol-3-phosphate dehydrogenase family.

Its subcellular location is the cytoplasm. It carries out the reaction sn-glycerol 3-phosphate + NAD(+) = dihydroxyacetone phosphate + NADH + H(+). The catalysed reaction is sn-glycerol 3-phosphate + NADP(+) = dihydroxyacetone phosphate + NADPH + H(+). Its pathway is membrane lipid metabolism; glycerophospholipid metabolism. Functionally, catalyzes the reduction of the glycolytic intermediate dihydroxyacetone phosphate (DHAP) to sn-glycerol 3-phosphate (G3P), the key precursor for phospholipid synthesis. In Acidiphilium cryptum (strain JF-5), this protein is Glycerol-3-phosphate dehydrogenase [NAD(P)+].